The following is a 77-amino-acid chain: UPF0213 protein VNG_2274C (77 aa).

The region spanning 1–75 (MHHVYVIECS…KQLSRAQKEA (75 aa)) is the GIY-YIG domain.

It belongs to the UPF0213 family.

The sequence is that of UPF0213 protein VNG_2274C from Halobacterium salinarum (strain ATCC 700922 / JCM 11081 / NRC-1) (Halobacterium halobium).